Reading from the N-terminus, the 187-residue chain is Dirigent protein 6 (187 aa).

Positions 1-29 (MAFLVEKQLFKALFSFFLLVLLFSDTVLS) are cleaved as a signal peptide. The cysteines at positions 40 and 186 are disulfide-linked. N-linked (GlcNAc...) asparagine glycans are attached at residues Asn-59 and Asn-123.

This sequence belongs to the plant dirigent protein family. As to quaternary structure, homodimer. In terms of tissue distribution, expressed in roots, cotyledon veins, leaf trichomes, flowers, siliques, and meristems. Present in interfascicular/vascular cambia and developing xylem.

It is found in the secreted. It localises to the extracellular space. Its subcellular location is the apoplast. Functionally, dirigent proteins impart stereoselectivity on the phenoxy radical-coupling reaction, yielding optically active lignans from two molecules of coniferyl alcohol in the biosynthesis of lignans, flavonolignans, and alkaloids and thus plays a central role in plant secondary metabolism. Enantiocomplementary dirigent protein that mediates the laccase-catalyzed enantioselective oxidative phenol coupling of (E)-coniferyl alcohol to (-)-pinoresinol. The sequence is that of Dirigent protein 6 (DIR6) from Arabidopsis thaliana (Mouse-ear cress).